The sequence spans 278 residues: Checkpoint protein Hus1-like (278 aa).

The protein belongs to the HUS1 family. As to quaternary structure, component of the 9-1-1 checkpoint clamp complex consisting of Rad9 isoform A, Rad1 and Hus1-like; the interactions with Rad1 and Rad9 are direct. This complex probably also forms with Rad9 isoform B, however 9-1-1 complex containing Rad9 isoform A localizes to the nuclear periphery. In terms of tissue distribution, expressed in ovary.

It localises to the cytoplasm. Its subcellular location is the nucleus envelope. Functionally, component of the 9-1-1 checkpoint clamp complex. Involved in both meiotic and somatic DNA damage responses. Essential for activation of the meiotic checkpoint in response to double-strand DNA breaks; required for the S-phase checkpoint but not the G2-M phase checkpoint. Involved in double strand break repair by homologous recombination during meiosis; influences the organization of chromosomal DNA in the meiotic nucleus. The protein is Checkpoint protein Hus1-like of Drosophila melanogaster (Fruit fly).